We begin with the raw amino-acid sequence, 227 residues long: Protein CAP22 (227 aa).

Residues N55 and N72 are each glycosylated (N-linked (GlcNAc...) asparagine). The disordered stretch occupies residues 143–162 (TTIGGGATPAPTSERSRTSD).

It localises to the secreted. It is found in the cell wall. This chain is Protein CAP22 (CAP22), found in Colletotrichum gloeosporioides (Anthracnose fungus).